A 105-amino-acid chain; its full sequence is Large ribosomal subunit protein eL36 (105 aa).

The interval 9-31 (VGLNKGHKVTKNVSKPRHSRRRR) is disordered. A compositionally biased stretch (basic residues) spans 13 to 31 (KGHKVTKNVSKPRHSRRRR). Position 62 is an N6-acetyllysine (K62).

The protein belongs to the eukaryotic ribosomal protein eL36 family. As to quaternary structure, component of the large ribosomal subunit.

The protein resides in the cytoplasm. Its subcellular location is the cytosol. Functionally, component of the large ribosomal subunit. The ribosome is a large ribonucleoprotein complex responsible for the synthesis of proteins in the cell. The sequence is that of Large ribosomal subunit protein eL36 (RPL36) from Oryctolagus cuniculus (Rabbit).